Consider the following 194-residue polypeptide: Phosphoheptose isomerase (194 aa).

Residues 37–194 (IANSFKQGGK…LIEFEMAKTA (158 aa)) enclose the SIS domain. 52–54 (NGG) lines the substrate pocket. His-61 and Glu-65 together coordinate Zn(2+). Residues Glu-65, 93–94 (ND), 119–121 (STS), Ser-124, and Gln-172 each bind substrate. 2 residues coordinate Zn(2+): Gln-172 and His-180.

It belongs to the SIS family. GmhA subfamily. As to quaternary structure, homotetramer. Zn(2+) serves as cofactor.

The protein localises to the cytoplasm. The catalysed reaction is 2 D-sedoheptulose 7-phosphate = D-glycero-alpha-D-manno-heptose 7-phosphate + D-glycero-beta-D-manno-heptose 7-phosphate. The protein operates within carbohydrate biosynthesis; D-glycero-D-manno-heptose 7-phosphate biosynthesis; D-glycero-alpha-D-manno-heptose 7-phosphate and D-glycero-beta-D-manno-heptose 7-phosphate from sedoheptulose 7-phosphate: step 1/1. It functions in the pathway bacterial outer membrane biogenesis; LOS core biosynthesis. Its function is as follows. Catalyzes the isomerization of sedoheptulose 7-phosphate in D-glycero-D-manno-heptose 7-phosphate. In Haemophilus ducreyi (strain 35000HP / ATCC 700724), this protein is Phosphoheptose isomerase.